Here is a 406-residue protein sequence, read N- to C-terminus: MAQTTVTVVATKRDALDPYIKILQNRSNDIDVSFSSYLKPDNNEQQQKENEDTELSIFEARSYFSENGSNDSRCQTRNLSGPRFSSVASAKVSSFTVGQTASSEASWNSQTGLLSNKNRQGSDRDGRRSSKKGPRWFFRRRACPCSSSKSVQVQESKPRIAVPKTGSDRIVSNRIVHSHQTISSPEPIRLTIPSNTVTRSIDYTANKEARAPVSNFSFPTLNETSQLSENPKNPVLNHIKPVRIEPALLPIKPVLNPTSPKGVIIDEEATSDASSDLFEIESFSTQTAARPWAPPVRDSMEETVSEYGYEPSEASVTWSVMTAEPASAVAANFSRIALSSSSTAFSGYDKKRTGLLNCHCEKAVMVNGDKRLVQPVKSVGVQNDVAGKVLCNNGSSKLSVTSRPRQ.

Residues Ser-106–Arg-119 are compositionally biased toward polar residues. The disordered stretch occupies residues Ser-106–Gly-133.

Belongs to the PKS family. As to quaternary structure, interacts in vitro with PHYA and PHYB. In terms of tissue distribution, expressed in the hypocotyl elongation zone. Not found in the root elongation zone.

Its function is as follows. Modulates phytochrome-mediated control of hypocotyl growth orientation. Involved in PHYA and PHYB signaling. Acts as an inhibitor of asymmetric growth. Not involved in the control of leaf flattening. This Arabidopsis thaliana (Mouse-ear cress) protein is Protein PHYTOCHROME KINASE SUBSTRATE 4 (PKS4).